Consider the following 230-residue polypeptide: Uracil-DNA glycosylase (230 aa).

D70 (proton acceptor) is an active-site residue.

Belongs to the uracil-DNA glycosylase (UDG) superfamily. UNG family.

Its subcellular location is the cytoplasm. It catalyses the reaction Hydrolyzes single-stranded DNA or mismatched double-stranded DNA and polynucleotides, releasing free uracil.. Excises uracil residues from the DNA which can arise as a result of misincorporation of dUMP residues by DNA polymerase or due to deamination of cytosine. The sequence is that of Uracil-DNA glycosylase from Pseudomonas fluorescens (strain ATCC BAA-477 / NRRL B-23932 / Pf-5).